The primary structure comprises 360 residues: Phospho-N-acetylmuramoyl-pentapeptide-transferase (360 aa).

10 helical membrane passes run 21-41 (YITV…LWIG), 73-93 (TMGG…WANL), 94-114 (ANPY…IGFV), 132-152 (WKYF…YWLG), 168-188 (IMPQ…VGTG), 199-219 (GLAI…AWAT), 239-259 (VVVF…FNTY), 263-283 (VFMG…VAIL), 288-308 (FLLV…ILQV), and 338-358 (VIIR…VTLK).

The protein belongs to the glycosyltransferase 4 family. MraY subfamily. Mg(2+) is required as a cofactor.

It is found in the cell inner membrane. It carries out the reaction UDP-N-acetyl-alpha-D-muramoyl-L-alanyl-gamma-D-glutamyl-meso-2,6-diaminopimeloyl-D-alanyl-D-alanine + di-trans,octa-cis-undecaprenyl phosphate = di-trans,octa-cis-undecaprenyl diphospho-N-acetyl-alpha-D-muramoyl-L-alanyl-D-glutamyl-meso-2,6-diaminopimeloyl-D-alanyl-D-alanine + UMP. It functions in the pathway cell wall biogenesis; peptidoglycan biosynthesis. Functionally, catalyzes the initial step of the lipid cycle reactions in the biosynthesis of the cell wall peptidoglycan: transfers peptidoglycan precursor phospho-MurNAc-pentapeptide from UDP-MurNAc-pentapeptide onto the lipid carrier undecaprenyl phosphate, yielding undecaprenyl-pyrophosphoryl-MurNAc-pentapeptide, known as lipid I. The protein is Phospho-N-acetylmuramoyl-pentapeptide-transferase of Haemophilus influenzae (strain PittEE).